We begin with the raw amino-acid sequence, 259 residues long: 3-deoxy-manno-octulosonate cytidylyltransferase (259 aa).

It belongs to the KdsB family.

Its subcellular location is the cytoplasm. The catalysed reaction is 3-deoxy-alpha-D-manno-oct-2-ulosonate + CTP = CMP-3-deoxy-beta-D-manno-octulosonate + diphosphate. The protein operates within nucleotide-sugar biosynthesis; CMP-3-deoxy-D-manno-octulosonate biosynthesis; CMP-3-deoxy-D-manno-octulosonate from 3-deoxy-D-manno-octulosonate and CTP: step 1/1. It functions in the pathway bacterial outer membrane biogenesis; lipopolysaccharide biosynthesis. In terms of biological role, activates KDO (a required 8-carbon sugar) for incorporation into bacterial lipopolysaccharide in Gram-negative bacteria. This chain is 3-deoxy-manno-octulosonate cytidylyltransferase, found in Alkalilimnicola ehrlichii (strain ATCC BAA-1101 / DSM 17681 / MLHE-1).